A 446-amino-acid polypeptide reads, in one-letter code: MTEQKRKIEKLAGVKGMNDILPQDAGLWEFFEATVKSLLRAYGYQNIRTPIVEHTQLFTRGIGEVTDIVEKEMYSFTDALNGENLTMRPENTAAVVRAAIEHNMLYDGPKRLWYIGPMFRHERPQRGRYRQFHQVGVEALGFAGPDADAEIIMMCQRLWDDLGLTGIKLEINSLGLAEERAAHRVELIKYLEQHVDVLDEDAKRRLYTNPLRVLDTKNPALQEIAQNAPKLIDFLGDESRAHFEGLQRLLLANNIPFKINPRLVRGLDYYNLTVFEWVTDKLGAQGTVAAGGRYDPLIEQLGGKPTAACGWAMGIERILELLKEEDLAPEQEGVDVYVVHQGEAAREQAFIAAERLRDTGLDVIFHCSADGAPASFKSQMKRADASGAAFAVIFGEEEVANGTAGVKALRGAGQEGEKNVQQTVPVEGLTEFLINAMVASAEDGDD.

This sequence belongs to the class-II aminoacyl-tRNA synthetase family. Homodimer.

It localises to the cytoplasm. It catalyses the reaction tRNA(His) + L-histidine + ATP = L-histidyl-tRNA(His) + AMP + diphosphate + H(+). The polypeptide is Histidine--tRNA ligase (Burkholderia vietnamiensis (strain G4 / LMG 22486) (Burkholderia cepacia (strain R1808))).